The sequence spans 187 residues: MSGPIGLEVQHPETEYRLKKVSEKFIESIHLMVNEPSVGLYRIQEHVRRSLPQLVDKKMELRSCQNQINGVCYDLDYSIKTVQSMQHIPHFTIIQECLRSAIASKKNLDAAKLERRSKKVDEGSGAQSADAVSEVSIETQDVEGFICPNCMQVLTSQDELLEHWQSQHETANDTRQGYNDDANNDQD.

The disordered stretch occupies residues 165 to 187 (QSQHETANDTRQGYNDDANNDQD).

Belongs to the BORCS8 family.

Its subcellular location is the lysosome membrane. Its function is as follows. May participate in the coupling of lysosomes to microtubule plus-end-directed kinesin motor. The sequence is that of BLOC-1-related complex subunit 8 homolog from Nematostella vectensis (Starlet sea anemone).